A 225-amino-acid polypeptide reads, in one-letter code: uncharacterized protein (225 aa).

This is an uncharacterized protein from Ureaplasma parvum serovar 3 (strain ATCC 700970).